Consider the following 260-residue polypeptide: Snake venom serine protease pallabin-2 (260 aa).

The first 18 residues, 1–18 (MVLIKVLANLLILQLSYA), serve as a signal peptide directing secretion. A propeptide spanning residues 19 to 24 (QKSSEL) is cleaved from the precursor. Residues 25-251 (IIGGDECNIN…HLDWIENIIA (227 aa)) form the Peptidase S1 domain. 6 disulfide bridges follow: Cys31-Cys163, Cys50-Cys66, Cys98-Cys258, Cys142-Cys212, Cys174-Cys191, and Cys202-Cys227. Catalysis depends on His65, which acts as the Charge relay system. Asn103 carries an N-linked (GlcNAc...) asparagine glycan. Asp110 (charge relay system) is an active-site residue. Ser206 acts as the Charge relay system in catalysis.

It belongs to the peptidase S1 family. Snake venom subfamily. Monomer. In terms of tissue distribution, expressed by the venom gland.

It localises to the secreted. Functionally, snake venom serine protease that may act in the hemostasis system of the prey. The polypeptide is Snake venom serine protease pallabin-2 (JZTHR7) (Gloydius halys (Chinese water mocassin)).